Consider the following 619-residue polypeptide: DEAD-box ATP-dependent RNA helicase 14 (619 aa).

Alanine 2 bears the N-acetylalanine mark. Positions 17–51 (HTLPKPWKGLIDDRTGYLYFWNPETNVTQYEKPTP) constitute a WW domain. Residues 47 to 139 (EKPTPSLPPK…APASELSPEA (93 aa)) form a disordered region. Over residues 61–71 (VSVSSSVQVQQ) the composition is skewed to low complexity. The span at 78 to 93 (PKDDDKYSRGSERVSR) shows a compositional bias: basic and acidic residues. Residues 125–139 (PLPSSAPASELSPEA) are compositionally biased toward low complexity. Residue serine 136 is modified to Phosphoserine. The Q motif signature appears at 158–186 (MSFEATGFPPELLREVLSAGFSAPTPIQA). One can recognise a Helicase ATP-binding domain in the interval 189–363 (WPIAMQGRDI…ADLLVNPAQV (175 aa)). 202–209 (AKTGSGKT) serves as a coordination point for ATP. A DEAD box motif is present at residues 311-314 (DEAD). The Helicase C-terminal domain maps to 392–536 (RLEQILRSQE…RVPPQIREMA (145 aa)). Residues 528–619 (VPPQIREMAT…FHETMMMKHR (92 aa)) are disordered. A compositionally biased stretch (gly residues) spans 552–568 (PSGGRGRGGDSGYGGRG). Basic and acidic residues-rich tracts occupy residues 582–595 (GRER…ERFN) and 609–619 (SFHETMMMKHR).

This sequence belongs to the DEAD box helicase family. DDX5/DBP2 subfamily. Ubiquitous. Preferentially expressed in flowers and roots.

Its subcellular location is the nucleus. It carries out the reaction ATP + H2O = ADP + phosphate + H(+). Functionally, ATP-dependent RNA helicase involved nonsense-mediated mRNA decay and ribosome biogenesis through rRNA processing. The chain is DEAD-box ATP-dependent RNA helicase 14 (RH14) from Arabidopsis thaliana (Mouse-ear cress).